The primary structure comprises 304 residues: tRNA pseudouridine synthase B (304 aa).

Asp-44 acts as the Nucleophile in catalysis.

It belongs to the pseudouridine synthase TruB family. Type 1 subfamily.

It carries out the reaction uridine(55) in tRNA = pseudouridine(55) in tRNA. Responsible for synthesis of pseudouridine from uracil-55 in the psi GC loop of transfer RNAs. This chain is tRNA pseudouridine synthase B, found in Novosphingobium aromaticivorans (strain ATCC 700278 / DSM 12444 / CCUG 56034 / CIP 105152 / NBRC 16084 / F199).